The sequence spans 380 residues: Cytochrome b (380 aa).

4 helical membrane-spanning segments follow: residues Phe-33–Met-53, Trp-77–Val-98, Trp-113–Leu-133, and Phe-178–Leu-198. Heme b-binding residues include His-83 and His-97. Heme b contacts are provided by His-182 and His-196. His-201 provides a ligand contact to a ubiquinone. 4 consecutive transmembrane segments (helical) span residues Ile-226 to Phe-246, Leu-288 to Asn-308, Leu-320 to Gly-340, and Phe-347 to Pro-367.

Belongs to the cytochrome b family. In terms of assembly, the cytochrome bc1 complex contains 11 subunits: 3 respiratory subunits (MT-CYB, CYC1 and UQCRFS1), 2 core proteins (UQCRC1 and UQCRC2) and 6 low-molecular weight proteins (UQCRH/QCR6, UQCRB/QCR7, UQCRQ/QCR8, UQCR10/QCR9, UQCR11/QCR10 and a cleavage product of UQCRFS1). This cytochrome bc1 complex then forms a dimer. Heme b is required as a cofactor.

It is found in the mitochondrion inner membrane. In terms of biological role, component of the ubiquinol-cytochrome c reductase complex (complex III or cytochrome b-c1 complex) that is part of the mitochondrial respiratory chain. The b-c1 complex mediates electron transfer from ubiquinol to cytochrome c. Contributes to the generation of a proton gradient across the mitochondrial membrane that is then used for ATP synthesis. This chain is Cytochrome b (MT-CYB), found in Thomasomys notatus (Distinguished oldfield mouse).